The following is a 727-amino-acid chain: Glycerol-3-phosphate dehydrogenase, mitochondrial (727 aa).

A mitochondrion-targeting transit peptide spans 1–42 (MAFQKVVKGTILMGGGALATVLGLSQFAHYRRKQVSLAYVEA). An FAD-binding site is contributed by 71–99 (DILVIGGGATGCGCALDAVTRGLKTALVE). Y601 carries the phosphotyrosine modification. 2 consecutive EF-hand domains span residues 623–658 (PDID…INVQ) and 659–694 (MDED…VHTG). Residues D672, N674, N676, Q678, and E683 each contribute to the Ca(2+) site.

This sequence belongs to the FAD-dependent glycerol-3-phosphate dehydrogenase family. The cofactor is FAD.

It is found in the mitochondrion. It carries out the reaction a quinone + sn-glycerol 3-phosphate = dihydroxyacetone phosphate + a quinol. The protein operates within polyol metabolism; glycerol degradation via glycerol kinase pathway; glycerone phosphate from sn-glycerol 3-phosphate (anaerobic route): step 1/1. Its activity is regulated as follows. Calcium-binding enhance the activity of the enzyme. Calcium-responsive mitochondrial glycerol-3-phosphate dehydrogenase which seems to be a key component of the pancreatic beta-cell glucose-sensing device. This is Glycerol-3-phosphate dehydrogenase, mitochondrial from Rattus norvegicus (Rat).